Consider the following 472-residue polypeptide: Argininosuccinate lyase (472 aa).

The protein belongs to the lyase 1 family. Argininosuccinate lyase subfamily.

The protein localises to the cytoplasm. It catalyses the reaction 2-(N(omega)-L-arginino)succinate = fumarate + L-arginine. Its pathway is amino-acid biosynthesis; L-arginine biosynthesis; L-arginine from L-ornithine and carbamoyl phosphate: step 3/3. This is Argininosuccinate lyase from Polynucleobacter necessarius subsp. necessarius (strain STIR1).